The primary structure comprises 544 residues: Protein angel homolog 2 (544 aa).

Belongs to the CCR4/nocturin family.

This chain is Protein angel homolog 2 (ANGEL2), found in Homo sapiens (Human).